The primary structure comprises 92 residues: DNA-directed RNA polymerase subunit Rpo11 (92 aa).

It belongs to the archaeal Rpo11/eukaryotic RPB11/RPC19 RNA polymerase subunit family. In terms of assembly, part of the RNA polymerase complex.

It localises to the cytoplasm. The catalysed reaction is RNA(n) + a ribonucleoside 5'-triphosphate = RNA(n+1) + diphosphate. DNA-dependent RNA polymerase (RNAP) catalyzes the transcription of DNA into RNA using the four ribonucleoside triphosphates as substrates. The polypeptide is DNA-directed RNA polymerase subunit Rpo11 (Pyrobaculum aerophilum (strain ATCC 51768 / DSM 7523 / JCM 9630 / CIP 104966 / NBRC 100827 / IM2)).